We begin with the raw amino-acid sequence, 266 residues long: MGILVILVDLQCCRCDAKIRKVLGCLEEEYCIEKVEYDVKNNRVIVRGKFDPEKLCKKIWCKAGKIIKEILIVDVWPPPLPQPPPPCKPPPCEKPPEDCKPKPCHCCSCEKPKPKPKPCHCEKPKPCHCEKPKPCEKPPPCKPEEPPKPPPEKPPPKPECKLVPYPYPVPYPYAGQWCCPKPEPPKPPPEPPKEPEPPKPCGCSHAFVCVCKPAPPPPPPCGCSGGHGNCGCGIRPWPPQVWPPPPVCPPPPWCYTEDNANACSIM.

Residues Met-1–Lys-68 form the HMA domain. The a metal cation site is built by Cys-12 and Cys-15. The segment at Cys-129–Pro-156 is disordered. The segment covering Lys-142–Pro-156 has biased composition (basic and acidic residues).

Functionally, involved in defense responses. Contributes to slowing defense responses toward Magnaporthe oryzae. The chain is Protein PYRICULARIA ORYZAE RESISTANCE 21 from Oryza sativa subsp. japonica (Rice).